Consider the following 299-residue polypeptide: Phosphoribosylaminoimidazole-succinocarboxamide synthase (299 aa).

Belongs to the SAICAR synthetase family.

The catalysed reaction is 5-amino-1-(5-phospho-D-ribosyl)imidazole-4-carboxylate + L-aspartate + ATP = (2S)-2-[5-amino-1-(5-phospho-beta-D-ribosyl)imidazole-4-carboxamido]succinate + ADP + phosphate + 2 H(+). It functions in the pathway purine metabolism; IMP biosynthesis via de novo pathway; 5-amino-1-(5-phospho-D-ribosyl)imidazole-4-carboxamide from 5-amino-1-(5-phospho-D-ribosyl)imidazole-4-carboxylate: step 1/2. This chain is Phosphoribosylaminoimidazole-succinocarboxamide synthase, found in Maridesulfovibrio salexigens (strain ATCC 14822 / DSM 2638 / NCIMB 8403 / VKM B-1763) (Desulfovibrio salexigens).